The primary structure comprises 385 residues: V-type proton ATPase subunit C (385 aa).

It belongs to the V-ATPase C subunit family. V-ATPase is a heteromultimeric enzyme made up of two complexes: the ATP-hydrolytic V1 complex and the proton translocation V0 complex. The V1 complex consists of three catalytic AB heterodimers that form a heterohexamer, three peripheral stalks each consisting of EG heterodimers, one central rotor including subunits D and F, and the regulatory subunits C and H. The proton translocation complex V0 consists of the proton transport subunit a, a ring of proteolipid subunits c9c'', rotary subunit d, subunits e and f, and the accessory subunits vah-19/Ac45 and vah-20/PRR. Interacts with V-type proton ATPase subunits a1 unc-32, a2 vha-5 and a3 vha-6.

It localises to the cytoplasm. The protein localises to the membrane. Subunit of the V1 complex of vacuolar(H+)-ATPase (V-ATPase), a multisubunit enzyme composed of a peripheral complex (V1) that hydrolyzes ATP and a membrane integral complex (V0) that translocates protons. V-ATPase is responsible for acidifying and maintaining the pH of intracellular compartments and in some cell types, is targeted to the plasma membrane, where it is responsible for acidifying the extracellular environment. Subunit C is necessary for the assembly of the catalytic sector of the enzyme and is likely to have a specific function in its catalytic activity. Has roles in embryogenesis and ovulation. The chain is V-type proton ATPase subunit C from Caenorhabditis briggsae.